The following is an 81-amino-acid chain: MESKRSSSSPLLILITTIMIIFIISGPKSVDADCKHPVGPYTDSCFTDCVSGKYGYNYESAFCSRDETGTCKICCCELINE.

An N-terminal signal peptide occupies residues 1–32; that stretch reads MESKRSSSSPLLILITTIMIIFIISGPKSVDA. Intrachain disulfides connect Cys34/Cys63, Cys45/Cys74, and Cys49/Cys76.

The protein belongs to the DEFL family.

The protein resides in the secreted. The polypeptide is Defensin-like protein 313 (Arabidopsis thaliana (Mouse-ear cress)).